The sequence spans 803 residues: Leucine--tRNA ligase (803 aa).

The 'HIGH' region motif lies at 40–51 (PYPSGAGLHVGH). The short motif at 575–579 (KMSKS) is the 'KMSKS' region element. K578 provides a ligand contact to ATP.

This sequence belongs to the class-I aminoacyl-tRNA synthetase family.

The protein localises to the cytoplasm. The enzyme catalyses tRNA(Leu) + L-leucine + ATP = L-leucyl-tRNA(Leu) + AMP + diphosphate. The polypeptide is Leucine--tRNA ligase (Listeria innocua serovar 6a (strain ATCC BAA-680 / CLIP 11262)).